The sequence spans 132 residues: Small ribosomal subunit protein uS11 (132 aa).

It belongs to the universal ribosomal protein uS11 family. As to quaternary structure, part of the 30S ribosomal subunit. Interacts with proteins S7 and S18. Binds to IF-3.

Its function is as follows. Located on the platform of the 30S subunit, it bridges several disparate RNA helices of the 16S rRNA. Forms part of the Shine-Dalgarno cleft in the 70S ribosome. The protein is Small ribosomal subunit protein uS11 of Chlamydia caviae (strain ATCC VR-813 / DSM 19441 / 03DC25 / GPIC) (Chlamydophila caviae).